A 490-amino-acid polypeptide reads, in one-letter code: Protein lag-3 (490 aa).

Disordered regions lie at residues 18 to 55, 105 to 155, 213 to 235, 307 to 362, and 391 to 490; these read PSVA…EDEP, EDEE…PTSE, SSAD…SPAE, SSSE…MQRI, and QQQQ…ANIN. Basic and acidic residues predominate over residues 105–119; the sequence is EDEERKRVEQQKNKE. Over residues 122–138 the composition is skewed to polar residues; sequence NASTSAPTSSRNGGQSV. Positions 307–318 are enriched in polar residues; it reads SSSESPTKQSPM. Composition is skewed to low complexity over residues 341-359, 391-404, and 413-456; these read QLQQ…QQEM, QQQQ…HHQM, and QAHQ…HHQM.

Component of a complex consisting of at least a lin-12/Notch intracellular domain (NICD), lag-1, and lag-3. Interacts with a NICD of lin-12/Notch or glp-1/Notch; the interactions are direct. Expressed in the progenitor zone and the early pachytene region of the hermaphrodite gonad.

It is found in the nucleus. Functionally, glp-1/Notch and lin-12/Notch proteins promote signaling by recruiting lag-3 to target promoters, where it functions as a transcriptional activator, probably as part of a complex with a Notch intracellular domain (NICD) and the transcription regulator lag-1. Involved in the p53-mediated germ-cell apoptotic response to DNA damage, perhaps acting as a transcriptional activator. May regulate phosphatase lip-1 mRNA transcription downstream of glp-1. This is Protein lag-3 (sel-8) from Caenorhabditis elegans.